The primary structure comprises 208 residues: Glutathione S-transferase GstB (208 aa).

Positions 1-83 (MITLWGRNNS…YLAAQYGQKR (83 aa)) constitute a GST N-terminal domain. Glutathione-binding positions include N12, N39, V53, and 67 to 68 (ES). Residues 88-208 (SPARRAEAEK…VRKVVMIPVS (121 aa)) form the GST C-terminal domain.

The protein belongs to the GST superfamily.

It catalyses the reaction RX + glutathione = an S-substituted glutathione + a halide anion + H(+). Its function is as follows. Conjugation of reduced glutathione to a wide number of exogenous and endogenous hydrophobic electrophiles. The sequence is that of Glutathione S-transferase GstB (gstB) from Escherichia coli O6:H1 (strain CFT073 / ATCC 700928 / UPEC).